We begin with the raw amino-acid sequence, 348 residues long: MTYNIVALPGDGIGPEILNGSLSLLEIISNKYNFNYQIEHHEFGGASIDTFGEPLTEKTLNACKRADAILLGAIGGPKWTDPNNRPEQGLLKLRKSLNLFANIRPTTVVKGASSLSPLKEERVEGTDLVIVRELTSGIYFGEPRHFNNHEALDSLTYTREEIERIVHVAFKLAASRRGKLTSVDKENVLASSKLWRKVVNEVSQLYPEVTVNHLLVDACSMHLITNPKQFDVIVCENLFGDILSDEASVIPGSLGLSPSASFSNDGPRLYEPIHGSAPDIAGKNVANPFGMILSLAMCLRESLNQPDAADELEQHIYNMIEHGQTTADLGGKLNTTDIFEILSQKLNH.

Position 76 to 87 (76 to 87 (GPKWTDPNNRPE)) interacts with NAD(+). Positions 94, 104, 132, and 217 each coordinate substrate. Residues Asp-217, Asp-241, and Asp-245 each contribute to the Mg(2+) site. NAD(+) is bound at residue 275–287 (GSAPDIAGKNVAN).

Belongs to the isocitrate and isopropylmalate dehydrogenases family. LeuB type 1 subfamily. Homodimer. Mg(2+) serves as cofactor. The cofactor is Mn(2+).

Its subcellular location is the cytoplasm. It carries out the reaction (2R,3S)-3-isopropylmalate + NAD(+) = 4-methyl-2-oxopentanoate + CO2 + NADH. It participates in amino-acid biosynthesis; L-leucine biosynthesis; L-leucine from 3-methyl-2-oxobutanoate: step 3/4. In terms of biological role, catalyzes the oxidation of 3-carboxy-2-hydroxy-4-methylpentanoate (3-isopropylmalate) to 3-carboxy-4-methyl-2-oxopentanoate. The product decarboxylates to 4-methyl-2 oxopentanoate. This chain is 3-isopropylmalate dehydrogenase, found in Staphylococcus aureus (strain Mu50 / ATCC 700699).